The primary structure comprises 145 residues: Large ribosomal subunit protein cL37 (145 aa).

A chloroplast-targeting transit peptide spans 1-63 (MALLCFNSFT…PRKNSIFIAS (63 aa)). Residues 125–145 (KRRLRKKGNWPPSKMKKLEGV) are disordered.

It belongs to the chloroplast-specific ribosomal protein cL37 family. As to quaternary structure, part of the 50S ribosomal subunit.

The protein localises to the plastid. The protein resides in the chloroplast. The protein is Large ribosomal subunit protein cL37 (PSRP5) of Pisum sativum (Garden pea).